The following is a 33-amino-acid chain: Beta-amanitin proprotein (33 aa).

A propeptide spanning residues 1 to 10 (MSDINATRLP) is cleaved from the precursor. The cyclopeptide (Ile-Pro) cross-link spans 11–18 (IWGIGCDP). The 2'-cysteinyl-6'-hydroxytryptophan sulfoxide (Trp-Cys) cross-link spans 12–16 (WGIGC). Positions 19–33 (CVGDDVTAVLTRGEA) are excised as a propeptide.

This sequence belongs to the MSDIN fungal toxin family. Processed by the macrocyclase-peptidase enzyme POPB to yield a toxic cyclic decapeptide. POPB first removes 10 residues from the N-terminus. Conformational trapping of the remaining peptide forces the enzyme to release this intermediate rather than proceed to macrocyclization. The enzyme rebinds the remaining peptide in a different conformation and catalyzes macrocyclization of the N-terminal 8 residues.

Its function is as follows. Toxin belonging to the bicyclic octapeptides amatoxins that acts by binding non-competitively to RNA polymerase II and greatly slowing the elongation of transcripts from target promoters. The protein is Beta-amanitin proprotein of Amanita pallidorosea.